Reading from the N-terminus, the 115-residue chain is Protachykinin-1 (115 aa).

A signal peptide spans 1 to 19 (MKILVALAVLALVSTQLFA). The propeptide occupies 20-56 (EDIRANDDLNYWSDWSDSDQIKEELPEPFEHLLQRIA). 2 positions are modified to methionine amide: Met-68 and Met-92.

Belongs to the tachykinin family. In terms of processing, the substance P form is cleaved at Pro-59 by the prolyl endopeptidase FAP (seprase) activity (in vitro). Substance P is also cleaved and degraded by Angiotensin-converting enzyme (ACE) and neprilysin (MME).

It localises to the secreted. In terms of biological role, tachykinins are active peptides which excite neurons, evoke behavioral responses, are potent vasodilators and secretagogues, and contract (directly or indirectly) many smooth muscles. The protein is Protachykinin-1 (TAC1) of Oryctolagus cuniculus (Rabbit).